We begin with the raw amino-acid sequence, 99 residues long: C-C motif chemokine 17 (99 aa).

An N-terminal signal peptide occupies residues 1–23 (MIPLKMLLLVTLLLGASLQVTHA). Cystine bridges form between Cys33–Cys57 and Cys34–Cys73.

It belongs to the intercrine beta (chemokine CC) family. In terms of tissue distribution, expressed in thymus, spleen, lymph node, lung and heart.

Its subcellular location is the secreted. In terms of biological role, chemokine, which displays chemotactic activity for T lymphocytes, preferentially Th2 cells, but not monocytes or granulocytes. Therefore plays an important role in a wide range of inflammatory and immunological processes. Acts by binding to CCR4 at T-cell surface. Mediates GM-CSF/CSF2-driven pain and inflammation. In the brain, required to maintain the typical, highly branched morphology of hippocampal microglia under homeostatic conditions. May be important for the appropriate adaptation of microglial morphology and synaptic plasticity to acute lipopolysaccharide (LPS)-induced neuroinflammation. Plays a role in wound healing, mainly by inducing fibroblast migration into the wound. The chain is C-C motif chemokine 17 (CCL17) from Canis lupus familiaris (Dog).